A 429-amino-acid chain; its full sequence is Probable electron transfer flavoprotein-quinone oxidoreductase YdiS (429 aa).

Position 8-22 (8-22 (AIVVGAGVAGSVAAL)) interacts with FAD.

Belongs to the ETF-QO/FixC family. Requires FAD as cofactor.

Its function is as follows. Probably accepts electrons from YdiQ/YdiR and reduces a quinone. The protein is Probable electron transfer flavoprotein-quinone oxidoreductase YdiS (ydiS) of Escherichia coli (strain K12).